The primary structure comprises 1052 residues: Membrane-bound transcription factor site-1 protease (1052 aa).

A signal peptide spans 1 to 17; sequence MKLVSTWLLVLVVLLCG. The propeptide occupies 18 to 186; the sequence is KRHLGDRLGT…TGRHSSRRLL (169 aa). The N-linked (GlcNAc...) asparagine glycan is linked to Asn148. Ser168 carries the phosphoserine modification. The Lumenal portion of the chain corresponds to 187–999; it reads RAIPRQVAQT…MPGRYNQEVG (813 aa). The Peptidase S8 domain maps to 190–472; the sequence is PRQVAQTLQA…HGKLDLLRAY (283 aa). Asp218 acts as the Charge relay system in catalysis. Asn236 carries an N-linked (GlcNAc...) asparagine glycan. His249 serves as the catalytic Charge relay system. Residue Asn305 is glycosylated (N-linked (GlcNAc...) asparagine). Catalysis depends on Ser414, which acts as the Charge relay system. N-linked (GlcNAc...) asparagine glycosylation is found at Asn515 and Asn728. Residues 877–887 show a composition bias toward polar residues; that stretch reads PSLSHSGNRQR. The disordered stretch occupies residues 877 to 900; it reads PSLSHSGNRQRPPSGAGLAPPERM. N-linked (GlcNAc...) asparagine glycosylation occurs at Asn939. A helical membrane pass occupies residues 1000–1022; that stretch reads QTIPVFAFLGAMVALAFFVVQIS. At 1023–1052 the chain is on the cytoplasmic side; that stretch reads KAKSRPKRRRPRAKRPQLAQQAHPARTPSV. The span at 1026 to 1037 shows a compositional bias: basic residues; the sequence is SRPKRRRPRAKR. A disordered region spans residues 1026–1052; the sequence is SRPKRRRPRAKRPQLAQQAHPARTPSV.

Belongs to the peptidase S8 family. In terms of assembly, interacts with LYSET; this interaction bridges GNPTAB to MBTPS1. Requires Ca(2+) as cofactor. The 148 kDa zymogen is processed progressively into two membrane-bound 120 and 106 kDa forms in the endoplasmic reticulum, and late into a secreted 98 kDa form. The propeptide is autocatalytically removed through an intramolecular cleavage after Leu-186. Further cleavage generates 14, 10, and 8 kDa intermediates.

It is found in the endoplasmic reticulum membrane. The protein resides in the golgi apparatus membrane. The enzyme catalyses Processes precursors containing basic and hydrophobic/aliphatic residues at P4 and P2, respectively, with a relatively relaxed acceptance of amino acids at P1 and P3.. Inhibited by divalent copper and zinc ions, but not by nickel or cobalt. Inhibited by its prosegment, but not smaller fragments. Inhibited by 4-(2-aminoethyl)benzenesulfonyl fluoride (AEBSF), a serine protease inhibitor. In terms of biological role, serine protease that cleaves after hydrophobic or small residues, provided that Arg or Lys is in position P4: known substrates include SREBF1/SREBP1, SREBF2/SREBP2, BDNF, GNPTAB, ATF6, ATF6B and FAM20C. Cleaves substrates after Arg-Ser-Val-Leu (SREBP2), Arg-His-Leu-Leu (ATF6), Arg-Gly-Leu-Thr (BDNF) and its own propeptide after Arg-Arg-Leu-Leu. Catalyzes the first step regulated intramembrane proteolysis activation of the sterol regulatory element-binding proteins (SREBPs) SREBF1/SREBP1 and SREBF2/SREBP2. Also mediates the first step of the regulated intramembrane proteolytic activation of the cyclic AMP-dependent transcription factor ATF-6 (ATF6 and ATF6B). Mediates the protein cleavage of GNPTAB into subunit alpha and beta, thereby participating in biogenesis of lysosomes. Cleaves the propeptide from FAM20C which is required for FAM20C secretion from the Golgi apparatus membrane and for enhancement of FAM20C kinase activity, promoting osteoblast differentiation and biomineralization. Involved in the regulation of M6P-dependent Golgi-to-lysosome trafficking of lysosomal enzymes. It is required for the activation of CREB3L2/BBF2H7, a transcriptional activator of MIA3/TANGO and other genes controlling mega vesicle formation. Therefore, it plays a key role in the regulation of mega vesicle-mediated collagen trafficking. In astrocytes and osteoblasts, upon DNA damage and ER stress, mediates the first step of the regulated intramembrane proteolytic activation of the transcription factor CREB3L1, leading to the inhibition of cell-cycle progression. This is Membrane-bound transcription factor site-1 protease (Mbtps1) from Mus musculus (Mouse).